We begin with the raw amino-acid sequence, 247 residues long: 1-(5-phosphoribosyl)-5-[(5-phosphoribosylamino)methylideneamino] imidazole-4-carboxamide isomerase (247 aa).

The active-site Proton acceptor is the Asp8. The Proton donor role is filled by Asp131.

It belongs to the HisA/HisF family.

Its subcellular location is the cytoplasm. The enzyme catalyses 1-(5-phospho-beta-D-ribosyl)-5-[(5-phospho-beta-D-ribosylamino)methylideneamino]imidazole-4-carboxamide = 5-[(5-phospho-1-deoxy-D-ribulos-1-ylimino)methylamino]-1-(5-phospho-beta-D-ribosyl)imidazole-4-carboxamide. It participates in amino-acid biosynthesis; L-histidine biosynthesis; L-histidine from 5-phospho-alpha-D-ribose 1-diphosphate: step 4/9. The polypeptide is 1-(5-phosphoribosyl)-5-[(5-phosphoribosylamino)methylideneamino] imidazole-4-carboxamide isomerase (Cupriavidus metallidurans (strain ATCC 43123 / DSM 2839 / NBRC 102507 / CH34) (Ralstonia metallidurans)).